We begin with the raw amino-acid sequence, 134 residues long: Prefoldin subunit 4 (134 aa).

An N-acetylalanine modification is found at Ala2. Ser125 bears the Phosphoserine mark.

Belongs to the prefoldin subunit beta family. In terms of assembly, heterohexamer of two PFD-alpha type and four PFD-beta type subunits. Interacts with URI1; the interaction is phosphorylation-dependent and occurs in a growth-dependent manner.

The protein localises to the nucleus. Its subcellular location is the cytoplasm. It localises to the mitochondrion. Functionally, binds specifically to cytosolic chaperonin (c-CPN) and transfers target proteins to it. Binds to nascent polypeptide chain and promotes folding in an environment in which there are many competing pathways for nonnative proteins. The protein is Prefoldin subunit 4 (PFDN4) of Bos taurus (Bovine).